The primary structure comprises 210 residues: MNWPDYSLEEAALRSGARFVAGVDEVGRGPLAGPVTAAAVILDAGCIPEGLNDSKKLTAKRREALAELVMARCDWAVGHASVEEIDRLNILRASHLAMCRAIAGLRQRPCLVLVDGNMLPRDLDLPGQAVVGGDARCLSIAAASILAKLLRDRIMVDLAQQHPGYGWEANAGYPTPAHRQALLDLGVTPYHRRSFAPVHKILCKEETATR.

The region spanning 18 to 207 is the RNase H type-2 domain; that stretch reads RFVAGVDEVG…VHKILCKEET (190 aa). Residues Asp-24, Glu-25, and Asp-115 each contribute to the a divalent metal cation site.

It belongs to the RNase HII family. Mn(2+) serves as cofactor. Requires Mg(2+) as cofactor.

It localises to the cytoplasm. It catalyses the reaction Endonucleolytic cleavage to 5'-phosphomonoester.. Functionally, endonuclease that specifically degrades the RNA of RNA-DNA hybrids. This Paracoccus denitrificans (strain Pd 1222) protein is Ribonuclease HII.